Here is a 267-residue protein sequence, read N- to C-terminus: Chlorophyll a-b binding protein 3A, chloroplastic (267 aa).

The transit peptide at 1-34 (MAASTMALSSSTFAGKTVKLAPSSSEITGNGRIT) directs the protein to the chloroplast. Residues 153–173 (LVHAQSILAIWACQVVLMGAV) form a helical membrane-spanning segment. Residues valine 154, serine 158, glutamine 166, glutamate 174, arginine 177, and leucine 183 each coordinate chlorophyll b. Chlorophyll a is bound by residues lysine 214, glutamate 215, asparagine 218, arginine 220, glutamine 232, histidine 247, and alanine 256. A helical membrane pass occupies residues 221–241 (LAMFSMFGFFVQAIVTGKGPL). Phenylalanine 263 contacts chlorophyll b.

This sequence belongs to the light-harvesting chlorophyll a/b-binding (LHC) protein family. The LHC complex consists of chlorophyll a-b binding proteins. Binds at least 14 chlorophylls (8 Chl-a and 6 Chl-b) and carotenoids such as lutein and neoxanthin. serves as cofactor. In terms of processing, photoregulated by reversible phosphorylation of its threonine residues.

Its subcellular location is the plastid. The protein localises to the chloroplast thylakoid membrane. Functionally, the light-harvesting complex (LHC) functions as a light receptor, it captures and delivers excitation energy to photosystems with which it is closely associated. In Solanum lycopersicum (Tomato), this protein is Chlorophyll a-b binding protein 3A, chloroplastic (CAB3A).